A 213-amino-acid chain; its full sequence is N-(5'-phosphoribosyl)anthranilate isomerase (213 aa).

It belongs to the TrpF family.

The catalysed reaction is N-(5-phospho-beta-D-ribosyl)anthranilate = 1-(2-carboxyphenylamino)-1-deoxy-D-ribulose 5-phosphate. Its pathway is amino-acid biosynthesis; L-tryptophan biosynthesis; L-tryptophan from chorismate: step 3/5. This is N-(5'-phosphoribosyl)anthranilate isomerase from Roseiflexus sp. (strain RS-1).